A 234-amino-acid polypeptide reads, in one-letter code: Orofacial cleft 1 candidate gene 1 protein homolog (234 aa).

Disordered stretches follow at residues 1–21 (MEKEKFQQKALKQTKQKKSKS) and 201–234 (SKHHKEASHHNKKNCNPGFMSSFKDREASRWQQR). The segment covering 202 to 213 (KHHKEASHHNKK) has biased composition (basic residues). Residues 223–234 (FKDREASRWQQR) show a composition bias toward basic and acidic residues.

The polypeptide is Orofacial cleft 1 candidate gene 1 protein homolog (OFCC1) (Gallus gallus (Chicken)).